A 187-amino-acid chain; its full sequence is Peptidyl-tRNA hydrolase (187 aa).

Position 15 (tyrosine 15) interacts with tRNA. Histidine 20 (proton acceptor) is an active-site residue. Tyrosine 64, asparagine 66, and asparagine 112 together coordinate tRNA.

This sequence belongs to the PTH family. In terms of assembly, monomer.

The protein resides in the cytoplasm. It carries out the reaction an N-acyl-L-alpha-aminoacyl-tRNA + H2O = an N-acyl-L-amino acid + a tRNA + H(+). Functionally, hydrolyzes ribosome-free peptidyl-tRNAs (with 1 or more amino acids incorporated), which drop off the ribosome during protein synthesis, or as a result of ribosome stalling. Its function is as follows. Catalyzes the release of premature peptidyl moieties from peptidyl-tRNA molecules trapped in stalled 50S ribosomal subunits, and thus maintains levels of free tRNAs and 50S ribosomes. The protein is Peptidyl-tRNA hydrolase of Phocaeicola vulgatus (strain ATCC 8482 / DSM 1447 / JCM 5826 / CCUG 4940 / NBRC 14291 / NCTC 11154) (Bacteroides vulgatus).